Here is a 94-residue protein sequence, read N- to C-terminus: Small ribosomal subunit protein uS19 (94 aa).

It belongs to the universal ribosomal protein uS19 family.

Its function is as follows. Protein S19 forms a complex with S13 that binds strongly to the 16S ribosomal RNA. The sequence is that of Small ribosomal subunit protein uS19 from Desulforudis audaxviator (strain MP104C).